A 256-amino-acid chain; its full sequence is Floral homeotic protein APETALA 1-2 (256 aa).

An MADS-box domain is found at 1 to 61 (MGRGRVQLKR…GKLFEYSTDS (61 aa)). Residues 88 to 178 (NTNWSMEYNR…SKQIKERENV (91 aa)) form the K-box domain. The disordered stretch occupies residues 187 to 206 (DEQNHGHNMPPPPPPQQHQI).

In terms of assembly, homodimer capable of binding to CArG-box sequences.

The protein localises to the nucleus. Transcription factor that promotes early floral meristem identity in synergy with LEAFY. Displays a redundant function with CAULIFLOWER in the up-regulation of LEAFY. Required subsequently for the transition of an inflorescence meristem into a floral meristem, and for the normal development of sepals and petals in flowers. Regulates positively B class homeotic proteins. The chain is Floral homeotic protein APETALA 1-2 (2AP1) from Brassica oleracea var. italica (Broccoli).